A 535-amino-acid chain; its full sequence is Flavonoid 3'-monooxygenase CYP75B4 (535 aa).

Residues 8–28 (ISTSLLLTTVALSVIVCYALV) traverse the membrane as a helical segment. Cysteine 469 is a binding site for heme.

Belongs to the cytochrome P450 family. Heme serves as cofactor.

It is found in the membrane. The catalysed reaction is a 3'-unsubstituted flavone + reduced [NADPH--hemoprotein reductase] + O2 = a 3'-hydroxyflavone + oxidized [NADPH--hemoprotein reductase] + H2O + H(+). Its pathway is secondary metabolite biosynthesis; flavonoid biosynthesis. Catalyzes the 3'-hydroxylation of the flavonoid B-ring to the 3',4'-hydroxylated state. Catalyzes in vitro 3'-hydroxylation of different flavonoids. Catalyzes the conversion of apigenin to luteolin, naringenin to eriodictyol, and kaempferol to quercetin. Possesses specific 5'-hydroxylase activity toward chrysoeriol (a 3'-methoxylated flavone) and is indispensable for tricin formation. Converts chrysoeriol to selgin, a precursor of tricin, suggesting that chrysoeriol, instead of tricetin, is an intermediate in tricin biosynthesis. The sequence is that of Flavonoid 3'-monooxygenase CYP75B4 from Oryza sativa subsp. japonica (Rice).